The following is a 397-amino-acid chain: Chorismate synthase (397 aa).

The NADP(+) site is built by R40 and R46. FMN-binding positions include 129–131, 257–258, G302, 317–321, and R343; these read RSS, QA, and KPISS.

The protein belongs to the chorismate synthase family. In terms of assembly, homotetramer. FMNH2 serves as cofactor.

The catalysed reaction is 5-O-(1-carboxyvinyl)-3-phosphoshikimate = chorismate + phosphate. The protein operates within metabolic intermediate biosynthesis; chorismate biosynthesis; chorismate from D-erythrose 4-phosphate and phosphoenolpyruvate: step 7/7. Functionally, catalyzes the anti-1,4-elimination of the C-3 phosphate and the C-6 proR hydrogen from 5-enolpyruvylshikimate-3-phosphate (EPSP) to yield chorismate, which is the branch point compound that serves as the starting substrate for the three terminal pathways of aromatic amino acid biosynthesis. This reaction introduces a second double bond into the aromatic ring system. This Chlorobium phaeovibrioides (strain DSM 265 / 1930) (Prosthecochloris vibrioformis (strain DSM 265)) protein is Chorismate synthase.